Consider the following 189-residue polypeptide: Putative ankyrin repeat protein L38 (189 aa).

Residues 108 to 137 (YGKTPLITAIKSGNCIMVKKLIDYGADFNK) form an ANK repeat.

In Acanthamoeba polyphaga mimivirus (APMV), this protein is Putative ankyrin repeat protein L38.